We begin with the raw amino-acid sequence, 791 residues long: Primase D5 (791 aa).

The active site involves Asp174. The segment at 346–471 (SDRGEYLVWL…ELMSILDDIQ (126 aa)) is primase. The SF3 helicase domain occupies 479–641 (ENRELYEQIL…FTNTKKKVHN (163 aa)). 505-512 (GETATGKS) lines the ATP pocket.

Belongs to the poxviridae D5 family. Interacts with A20.

Functionally, primase which may have roles in initiation of DNA replication or lagging-strand synthesis. The protein is Primase D5 of Fowlpox virus (strain NVSL) (FPV).